The chain runs to 284 residues: 4-diphosphocytidyl-2-C-methyl-D-erythritol kinase (284 aa).

Lys10 is an active-site residue. 92-102 lines the ATP pocket; the sequence is PYGAGLGSGSS. The active site involves Asp134.

Belongs to the GHMP kinase family. IspE subfamily.

The catalysed reaction is 4-CDP-2-C-methyl-D-erythritol + ATP = 4-CDP-2-C-methyl-D-erythritol 2-phosphate + ADP + H(+). Its pathway is isoprenoid biosynthesis; isopentenyl diphosphate biosynthesis via DXP pathway; isopentenyl diphosphate from 1-deoxy-D-xylulose 5-phosphate: step 3/6. In terms of biological role, catalyzes the phosphorylation of the position 2 hydroxy group of 4-diphosphocytidyl-2C-methyl-D-erythritol. The polypeptide is 4-diphosphocytidyl-2-C-methyl-D-erythritol kinase (Salinibacter ruber (strain DSM 13855 / M31)).